A 156-amino-acid polypeptide reads, in one-letter code: ATP synthase subunit b (156 aa).

The helical transmembrane segment at 7–27 threads the bilayer; sequence LIGQTVAFIIFVWFCMKFVWP.

It belongs to the ATPase B chain family. As to quaternary structure, F-type ATPases have 2 components, F(1) - the catalytic core - and F(0) - the membrane proton channel. F(1) has five subunits: alpha(3), beta(3), gamma(1), delta(1), epsilon(1). F(0) has three main subunits: a(1), b(2) and c(10-14). The alpha and beta chains form an alternating ring which encloses part of the gamma chain. F(1) is attached to F(0) by a central stalk formed by the gamma and epsilon chains, while a peripheral stalk is formed by the delta and b chains.

The protein resides in the cell inner membrane. Functionally, f(1)F(0) ATP synthase produces ATP from ADP in the presence of a proton or sodium gradient. F-type ATPases consist of two structural domains, F(1) containing the extramembraneous catalytic core and F(0) containing the membrane proton channel, linked together by a central stalk and a peripheral stalk. During catalysis, ATP synthesis in the catalytic domain of F(1) is coupled via a rotary mechanism of the central stalk subunits to proton translocation. Component of the F(0) channel, it forms part of the peripheral stalk, linking F(1) to F(0). In Shewanella baltica (strain OS185), this protein is ATP synthase subunit b.